A 191-amino-acid chain; its full sequence is Peptidyl-tRNA hydrolase (191 aa).

Tyr15 provides a ligand contact to tRNA. The Proton acceptor role is filled by His20. TRNA is bound by residues Phe66, Asn68, and Asn114.

It belongs to the PTH family. In terms of assembly, monomer.

The protein resides in the cytoplasm. The catalysed reaction is an N-acyl-L-alpha-aminoacyl-tRNA + H2O = an N-acyl-L-amino acid + a tRNA + H(+). Functionally, hydrolyzes ribosome-free peptidyl-tRNAs (with 1 or more amino acids incorporated), which drop off the ribosome during protein synthesis, or as a result of ribosome stalling. Its function is as follows. Catalyzes the release of premature peptidyl moieties from peptidyl-tRNA molecules trapped in stalled 50S ribosomal subunits, and thus maintains levels of free tRNAs and 50S ribosomes. In Streptococcus agalactiae serotype Ia (strain ATCC 27591 / A909 / CDC SS700), this protein is Peptidyl-tRNA hydrolase.